The sequence spans 433 residues: FAD-dependent monooxygenase notI (433 aa).

The FAD site is built by Glu45 and Arg117. Residue Arg195 is part of the active site. Residues Asp314 and Ala327 each coordinate FAD.

The protein belongs to the paxM FAD-dependent monooxygenase family. Requires FAD as cofactor.

Its pathway is alkaloid biosynthesis. In terms of biological role, FAD-dependent monooxygenase; part of the gene cluster that mediates the biosynthesis of notoamide, a fungal indole alkaloid that belongs to a family of natural products containing a characteristic bicyclo[2.2.2]diazaoctane core. The first step of notoamide biosynthesis involves coupling of L-proline and L-tryptophan by the bimodular NRPS notE, to produce cyclo-L-tryptophan-L-proline called brevianamide F. The reverse prenyltransferase notF then acts as a deoxybrevianamide E synthase and converts brevianamide F to deoxybrevianamide E via reverse prenylation at C-2 of the indole ring leading to the bicyclo[2.2.2]diazaoctane core. Deoxybrevianamide E is further hydroxylated at C-6 of the indole ring, likely catalyzed by the cytochrome P450 monooxygenase notG, to yield 6-hydroxy-deoxybrevianamide E. 6-hydroxy-deoxybrevianamide E is a specific substrate of the prenyltransferase notC for normal prenylation at C-7 to produce 6-hydroxy-7-prenyl-deoxybrevianamide, also called notoamide S. As the proposed pivotal branching point in notoamide biosynthesis, notoamide S can be diverted to notoamide E through an oxidative pyran ring closure putatively catalyzed by either notH cytochrome P450 monooxygenase or the notD FAD-linked oxidoreductase. This step would be followed by an indole 2,3-epoxidation-initiated pinacol-like rearrangement catalyzed by the notB FAD-dependent monooxygenase leading to the formation of notoamide C and notoamide D. On the other hand notoamide S is converted to notoamide T by notH (or notD), a bifunctional oxidase that also functions as the intramolecular Diels-Alderase responsible for generation of (+)-notoamide T. To generate antipodal (-)-notoaminide T, notH' (or notD') in Aspergillus versicolor is expected to catalyze a Diels-Alder reaction leading to the opposite stereochemistry. The remaining oxidoreductase notD (or notH) likely catalyzes the oxidative pyran ring formation to yield (+)-stephacidin A. The FAD-dependent monooxygenase notI is highly similar to notB and is predicted to catalyze a similar conversion from (+)-stephacidin A to (-)-notoamide B via the 2,3-epoxidation of (+)-stephacidin A followed by a pinacol-type rearrangement. Finally, it remains unclear which enzyme could be responsible for the final hydroxylation steps leading to notoamide A and sclerotiamide. The polypeptide is FAD-dependent monooxygenase notI (Aspergillus sp. (strain MF297-2)).